The chain runs to 190 residues: dTTP/UTP pyrophosphatase (190 aa).

Aspartate 69 serves as the catalytic Proton acceptor.

It belongs to the Maf family. YhdE subfamily. A divalent metal cation serves as cofactor.

It is found in the cytoplasm. It carries out the reaction dTTP + H2O = dTMP + diphosphate + H(+). It catalyses the reaction UTP + H2O = UMP + diphosphate + H(+). In terms of biological role, nucleoside triphosphate pyrophosphatase that hydrolyzes dTTP and UTP. May have a dual role in cell division arrest and in preventing the incorporation of modified nucleotides into cellular nucleic acids. The chain is dTTP/UTP pyrophosphatase from Sphingopyxis alaskensis (strain DSM 13593 / LMG 18877 / RB2256) (Sphingomonas alaskensis).